The sequence spans 488 residues: Peptidoglycan endopeptidase LytF (488 aa).

The signal sequence occupies residues 1–26; that stretch reads MKKKLAAGLTASAIVGTTLVVTPAEA. LysM domains follow at residues 27-70 and 92-135; these read ATIK…TLTI and SVYT…KLKV. 3 disordered regions span residues 70 to 93, 137 to 176, and 218 to 239; these read IPGS…GSSV, GTVS…TGTY, and KSSG…TSAT. 2 stretches are compositionally biased toward low complexity: residues 72–93 and 140–172; these read GSKS…GSSV and SSSS…SSSS. Positions 174–217 constitute a LysM 3 domain; that stretch reads GTYKVQLGDSLWKIANKVNMSIAELKVLNNLKSDTIYVNQVLKT. The region spanning 240 to 283 is the LysM 4 domain; it reads TKYTVKSGDSLWKIANNYNLTVQQIRNINNLKSDVLYVGQVLKL. The disordered stretch occupies residues 286 to 306; sequence KASSGSSSSSSSSSNASSGTT. In terms of domain architecture, LysM 5 spans 307 to 350; sequence TTYTVKSGDSLWVIAQKFNVTAQQIREKNNLKTDVLQVGQKLVI. The NlpC/P60 domain occupies 370 to 488; that stretch reads SAKINTMISA…QRYLGAKRYF (119 aa). Cys-400 serves as the catalytic Nucleophile. Residue His-449 is the Proton acceptor of the active site. Asn-461 is an active-site residue.

It belongs to the peptidase C40 family.

The protein resides in the secreted. The protein localises to the cell wall. Is inhibited in vitro by para-hydroxymercuribenzoate, a sulfydryl inhibitor. Cell wall hydrolase that cleaves gamma-D-glutamate-meso-diaminopimelate bonds in peptidoglycan. LytF is necessary and sufficient for vegetative daughter cell separation, and also seems to play a role in cell autolysis. In Bacillus subtilis (strain 168), this protein is Peptidoglycan endopeptidase LytF (lytF).